The following is a 2210-amino-acid chain: RNA-directed RNA polymerase L (2210 aa).

Residues 26-285 (KAIFLSQTKL…KCAIMSEEDS (260 aa)) are endonuclease. Residues Glu-51, Asp-88, and Glu-101 each coordinate Mn(2+). Residue Lys-114 is part of the active site. A RdRp catalytic domain is found at 1163–1359 (LDMKSVVRQG…FLSDKLNKFV (197 aa)). Residue Asp-1319 participates in Mg(2+) binding.

It belongs to the Bunyavirales RNA polymerase family. Homomultimer; the oligomeric structure is essential for the polymerase activity. Interacts with nucleoprotein N. Interacts with protein Z; this interaction inhibits viral transcription and replication, Z partially blocks the product exit tunnel for the releasing nascent RNA product. The cofactor is Mn(2+). Requires Mg(2+) as cofactor.

The protein localises to the virion. Its subcellular location is the host cytoplasm. The enzyme catalyses RNA(n) + a ribonucleoside 5'-triphosphate = RNA(n+1) + diphosphate. Its function is as follows. RNA-dependent RNA polymerase, which is responsible for the replication and transcription of the viral RNA genome using antigenomic RNA as an intermediate. During transcription, synthesizes subgenomic RNAs and assures their capping by a cap-snatching mechanism, which involves the endonuclease activity cleaving the host capped pre-mRNAs. These short capped RNAs are then used as primers for viral transcription. The 3'-end of subgenomic mRNAs molecules are heterogeneous and not polyadenylated. The replicase function is to direct synthesis of antigenomic and genomic RNA which are encapsidated and non capped. As a consequence of the use of the same enzyme for both transcription and replication, these mechanisms need to be well coordinated. These processes may be regulated by proteins N and Z in a dose-dependent manner. Z protein inhibits the viral polymerase L und thus the viral transcription and RNA synthesis. This is RNA-directed RNA polymerase L from Sigmodon alstoni (PIRV).